The chain runs to 100 residues: Elevenin (100 aa).

The first 24 residues, 1–24, serve as a signal peptide directing secretion; sequence MALSQKALLVLVLSMLLTASDSWA. C29 and C38 are oxidised to a cystine. Residues 44-100 constitute a propeptide that is removed on maturation; that stretch reads KRGGDSLSVGGSAELDDTLTDPFLKSEEPKEWRELTRLSRVLQTFLSHPTGEMEQHD.

This sequence belongs to the elevenin family. As to quaternary structure, monomer. In terms of tissue distribution, expressed by the venom duct.

The protein resides in the secreted. Functionally, may mimic the function of prey elevenin neuropeptide. In vivo, intracranial injection in mice induces hyperactivity. The polypeptide is Elevenin (Conus ammiralis (Admiral cone)).